The following is a 385-amino-acid chain: Sulfoquinovose monooxygenase (385 aa).

Positions 366–385 are disordered; that stretch reads AYGRVPSETPATPLGNGERH.

It belongs to the SsuD family. Homodimer.

It carries out the reaction 6-sulfo-D-quinovose + FMNH2 + O2 = 6-dehydro-D-glucose + FMN + sulfite + H2O + 2 H(+). Its function is as follows. Part of the sulfoquinovose monooxygenase (sulfo-SMO) pathway, a D-sulfoquinovose degradation pathway that enables the complete utilization of all carbons within sulfoquinovose (SQ) with concomitant production of inorganic sulfite. Catalyzes the oxidative desulfurization of sulfoquinovose to sulfite and 6-dehydro-D-glucose. Is highly specific for sulfoquinovose and cannot use sulfoquinovosyl glycerol. FMNH(2) is provided by the FMN reductase SmoA. This Agrobacterium fabrum (strain C58 / ATCC 33970) (Agrobacterium tumefaciens (strain C58)) protein is Sulfoquinovose monooxygenase.